We begin with the raw amino-acid sequence, 397 residues long: Elongation factor Tu (397 aa).

A tr-type G domain is found at 10-207; that stretch reads LPHVNVGTIG…TLDSYIPEPV (198 aa). The G1 stretch occupies residues 19–26; it reads GHVDHGKT. 19 to 26 is a GTP binding site; that stretch reads GHVDHGKT. Position 26 (T26) interacts with Mg(2+). Residues 60 to 64 are G2; that stretch reads GITIN. The interval 81-84 is G3; the sequence is DCPG. GTP contacts are provided by residues 81 to 85 and 136 to 139; these read DCPGH and NKAD. The tract at residues 136–139 is G4; that stretch reads NKAD. The G5 stretch occupies residues 174–176; that stretch reads SAR.

This sequence belongs to the TRAFAC class translation factor GTPase superfamily. Classic translation factor GTPase family. EF-Tu/EF-1A subfamily. As to quaternary structure, monomer.

It localises to the cytoplasm. It catalyses the reaction GTP + H2O = GDP + phosphate + H(+). Its function is as follows. GTP hydrolase that promotes the GTP-dependent binding of aminoacyl-tRNA to the A-site of ribosomes during protein biosynthesis. The polypeptide is Elongation factor Tu (Pseudomonas syringae pv. syringae (strain B728a)).